The sequence spans 435 residues: Pregnancy-specific beta-1-glycoprotein 6 (435 aa).

The signal sequence occupies residues methionine 1–alanine 34. Positions glutamine 35–serine 143 constitute an Ig-like V-type domain. Residues asparagine 61, asparagine 103, and asparagine 110 are each glycosylated (N-linked (GlcNAc...) asparagine). The Cell attachment site motif lies at arginine 126–aspartate 128. Ig-like C2-type domains are found at residues proline 148–asparagine 233, proline 241–asparagine 326, and proline 334–serine 405. Cystine bridges form between cysteine 168-cysteine 216, cysteine 261-cysteine 309, and cysteine 353-cysteine 393. 4 N-linked (GlcNAc...) asparagine glycosylation sites follow: asparagine 198, asparagine 267, asparagine 302, and asparagine 386.

Belongs to the immunoglobulin superfamily. CEA family.

The protein resides in the secreted. This Homo sapiens (Human) protein is Pregnancy-specific beta-1-glycoprotein 6 (PSG6).